Reading from the N-terminus, the 235-residue chain is Ribosome maturation factor RimM (235 aa).

The span at 1 to 19 (MKHEEANKEIGGRGAEGQR) shows a compositional bias: basic and acidic residues. The tract at residues 1-49 (MKHEEANKEIGGRGAEGQRSKRVGGNSKIQNIQSPAPNPQPIVPNTQSP) is disordered. Positions 150 to 230 (EDEYHVLDLI…RIEITPPPGL (81 aa)) constitute a PRC barrel domain.

Belongs to the RimM family. Binds ribosomal protein uS19.

The protein localises to the cytoplasm. Its function is as follows. An accessory protein needed during the final step in the assembly of 30S ribosomal subunit, possibly for assembly of the head region. Essential for efficient processing of 16S rRNA. May be needed both before and after RbfA during the maturation of 16S rRNA. It has affinity for free ribosomal 30S subunits but not for 70S ribosomes. In Nostoc punctiforme (strain ATCC 29133 / PCC 73102), this protein is Ribosome maturation factor RimM.